We begin with the raw amino-acid sequence, 365 residues long: Peptide chain release factor 2 (365 aa).

Gln-252 is modified (N5-methylglutamine).

The protein belongs to the prokaryotic/mitochondrial release factor family. Post-translationally, methylated by PrmC. Methylation increases the termination efficiency of RF2.

Its subcellular location is the cytoplasm. In terms of biological role, peptide chain release factor 2 directs the termination of translation in response to the peptide chain termination codons UGA and UAA. The protein is Peptide chain release factor 2 of Pectobacterium atrosepticum (strain SCRI 1043 / ATCC BAA-672) (Erwinia carotovora subsp. atroseptica).